A 39-amino-acid chain; its full sequence is Cytochrome b6-f complex subunit 5 (39 aa).

Residues 5-25 (LLSGIVLGLVPVTILGLFVTA) traverse the membrane as a helical segment.

It belongs to the PetG family. The 4 large subunits of the cytochrome b6-f complex are cytochrome b6, subunit IV (17 kDa polypeptide, PetD), cytochrome f and the Rieske protein, while the 4 small subunits are PetG, PetL, PetM and PetN. The complex functions as a dimer.

The protein localises to the plastid. It localises to the chloroplast thylakoid membrane. Component of the cytochrome b6-f complex, which mediates electron transfer between photosystem II (PSII) and photosystem I (PSI), cyclic electron flow around PSI, and state transitions. PetG is required for either the stability or assembly of the cytochrome b6-f complex. This chain is Cytochrome b6-f complex subunit 5, found in Pleurastrum terricola (Filamentous green alga).